The sequence spans 124 residues: Small ribosomal subunit protein uS12c (124 aa).

The interval 105–124 (AGVKDRRQSRSKYGAKRPKA) is disordered. Positions 113 to 124 (SRSKYGAKRPKA) are enriched in basic residues.

It belongs to the universal ribosomal protein uS12 family. As to quaternary structure, part of the 30S ribosomal subunit.

It is found in the plastid. It localises to the cyanelle. With S4 and S5 plays an important role in translational accuracy. Located at the interface of the 30S and 50S subunits. This chain is Small ribosomal subunit protein uS12c (rps12), found in Cyanophora paradoxa.